The chain runs to 547 residues: MDTSKDLICIGFEGTAEKTGVGIITSKGEVLFNKTIIYTPPVQGIHPREAADHHAETFVKLLKEALTVVPIEKIDLVSFSLGPGLGPSLRVTATTARALSLSINKPIIGVNHCISHVEIGKLKTDAVDPLTLYVSGGNTQVLAYTGKKYRVIGETLDIAIGNCLDQFARHCNMPHPGGVYVEKYAKDGNKFMKLPYTVKGMDISLSGLLTAAMKKYDSKERIEDVCYSLQETSFSMLTEITERALAHTNKAEVMLVGGVAANNRLKEMLDVMCSEQNVDFYVPEREFCGDNGAMIAWLGILQYLNGKRMDLADTKPISNYRSDMVEVNWIHEENNNSENGNIKSRIIPEHLIGKGAEADISKGRYLEFESITKERVKKGYRTSELDELIRMRRTVKEARFLAAIKELGIYAPSIFDIDKENKKIAMSYIHGKIAKEKIEEGSIDFCEDLGKIIGKMHVGGIVHNDLTTSNFIVSDNTFVIDFGLGKYSDLVEDKAIDLIVLKKSIMSIHYDKFDRVWNKIVEGYKTYNLAESVLECMKEVEKRARYL.

A kae1 region spans residues 1 to 329 (MDTSKDLICI…YRSDMVEVNW (329 aa)). H112, H116, and Y133 together coordinate Fe cation. L-threonylcarbamoyladenylate is bound by residues 133–137 (YVSGG), D165, G178, E182, and N262. A Fe cation-binding site is contributed by D290. The region spanning 346–547 (IIPEHLIGKG…KEVEKRARYL (202 aa)) is the Protein kinase domain. ATP is bound by residues 352–360 (IGKGAEADI) and K373. The active-site Proton acceptor; for kinase activity is the D465.

This sequence in the N-terminal section; belongs to the KAE1 / TsaD family. In the C-terminal section; belongs to the protein kinase superfamily. Tyr protein kinase family. BUD32 subfamily. In terms of assembly, component of the KEOPS complex that consists of Kae1, Bud32, Cgi121 and Pcc1; the whole complex dimerizes. Fe(2+) is required as a cofactor.

It localises to the cytoplasm. It catalyses the reaction L-seryl-[protein] + ATP = O-phospho-L-seryl-[protein] + ADP + H(+). The catalysed reaction is L-threonyl-[protein] + ATP = O-phospho-L-threonyl-[protein] + ADP + H(+). The enzyme catalyses L-threonylcarbamoyladenylate + adenosine(37) in tRNA = N(6)-L-threonylcarbamoyladenosine(37) in tRNA + AMP + H(+). In terms of biological role, required for the formation of a threonylcarbamoyl group on adenosine at position 37 (t(6)A37) in tRNAs that read codons beginning with adenine. Is a component of the KEOPS complex that is probably involved in the transfer of the threonylcarbamoyl moiety of threonylcarbamoyl-AMP (TC-AMP) to the N6 group of A37. The Kae1 domain likely plays a direct catalytic role in this reaction. The Bud32 domain probably displays kinase activity that regulates Kae1 function. The protein is Probable bifunctional tRNA threonylcarbamoyladenosine biosynthesis protein of Methanococcus maripaludis (strain C7 / ATCC BAA-1331).